A 158-amino-acid polypeptide reads, in one-letter code: MQCPSCQNTDSRVLESRAADAGRSVRRRRECLHCDFRFTTYERVETVPITVLKRNGNRETFNRSKILNGLTMACQKTGLEQDRLESMVNELELQLQQRSGREVNSAEIGEMVLDQLSEMSEVAYVRFASVYRHFRGINDFVAALEGIHANKEQLAAVR.

Residues 3 to 34 (CPSCQNTDSRVLESRAADAGRSVRRRRECLHC) fold into a zinc finger. In terms of domain architecture, ATP-cone spans 49-139 (ITVLKRNGNR…VYRHFRGIND (91 aa)).

Belongs to the NrdR family. It depends on Zn(2+) as a cofactor.

Its function is as follows. Negatively regulates transcription of bacterial ribonucleotide reductase nrd genes and operons by binding to NrdR-boxes. The chain is Transcriptional repressor NrdR from Prochlorococcus marinus (strain MIT 9303).